Here is a 198-residue protein sequence, read N- to C-terminus: RNA 2',3'-cyclic phosphodiesterase (198 aa).

Residue H39 is the Proton donor of the active site. 2 short sequence motifs (HXTX) span residues 39-42 (HLTL) and 130-133 (HITL). H130 functions as the Proton acceptor in the catalytic mechanism.

Belongs to the 2H phosphoesterase superfamily. ThpR family.

It catalyses the reaction a 3'-end 2',3'-cyclophospho-ribonucleotide-RNA + H2O = a 3'-end 2'-phospho-ribonucleotide-RNA + H(+). Functionally, hydrolyzes RNA 2',3'-cyclic phosphodiester to an RNA 2'-phosphomonoester. In Thermus thermophilus (strain ATCC 27634 / DSM 579 / HB8), this protein is RNA 2',3'-cyclic phosphodiesterase.